Consider the following 298-residue polypeptide: Zinc-alpha-2-glycoprotein (298 aa).

An N-terminal signal peptide occupies residues 1-20 (MVRMVPVLLSLLLLLGPAVP). The residue at position 21 (Gln21) is a Pyrrolidone carboxylic acid. N-linked (GlcNAc...) (complex) asparagine glycosylation is present at Asn109. A glycan (N-linked (GlcNAc...) asparagine) is linked at Asn112. 2 cysteine pairs are disulfide-bonded: Cys123–Cys186 and Cys225–Cys280. A glycan (N-linked (GlcNAc...) (complex) asparagine) is linked at Asn128. The Ig-like C1-type domain occupies 207 to 292 (PSVVVTSHQA…QHSSLAQPLV (86 aa)). The N-linked (GlcNAc...) asparagine glycan is linked to Asn259.

This sequence belongs to the MHC class I family. In terms of assembly, interacts with PIP. Post-translationally, N-glycosylated. N-glycan at Asn-128: Hex5HexNAc4. As to expression, blood plasma, seminal plasma, urine, saliva, sweat, epithelial cells of various human glands, liver.

Its subcellular location is the secreted. Functionally, stimulates lipid degradation in adipocytes and causes the extensive fat losses associated with some advanced cancers. May bind polyunsaturated fatty acids. This chain is Zinc-alpha-2-glycoprotein (AZGP1), found in Homo sapiens (Human).